The following is a 78-amino-acid chain: Antitoxin VapB1 (78 aa).

A SpoVT-AbrB domain is found at 3-44 (TKVFQSGNSQAVRIPMDFRFDVDTVEIFRKENGDVVLRPVSK).

This sequence belongs to the VapB family. Forms multimers, as well forming as a complex with VapC1.

Functionally, antitoxin component of a type II toxin-antitoxin (TA) system. Upon expression in E.coli neutralizes the effect of toxin VapC1. In vitro inhibits the RNase activity of VapC1. The sequence is that of Antitoxin VapB1 (vapB1) from Haemophilus influenzae (strain R2866).